The primary structure comprises 396 residues: MSKWGHLAQTLTARKQQDLYRSRLTIDSPQAPRVMIEGREYLAFCSNDYLGLANDPRLIAAAQQALSEFGLGGGASHLVIGHHRAHHELELDLAEFTGRDRALLFSTGYMANLGVASALLGRGDYVIEDKLNHASLLDAGMLSGARLLRYRHADAEHLALRLDEVGDSRALVITDGVFSMDGDIAPLDAIAQVCHSKDAMLMVDDAHGFGVLGTEGGGCAAHFQMNQVQVPVLMGTLGKSYGAAGAFVAGSGELIETLVQFARTYIYTTSMPPAIAAAARVSLRISREETWRRERLNELVTRFRKEAIGMGYQLAASSTPIQPVFIGDAAAAMELSQALRKEGILITAIRPPTVPANTSRLRVTFSAAHTDDDLNQLLEVLHKYRGATNIAGVANA.

A substrate-binding site is contributed by Arg-21. 108 to 109 (GY) is a binding site for pyridoxal 5'-phosphate. His-133 is a substrate binding site. Residues Ser-179, His-207, and Thr-236 each contribute to the pyridoxal 5'-phosphate site. Lys-239 bears the N6-(pyridoxal phosphate)lysine mark. Residue Thr-353 participates in substrate binding.

This sequence belongs to the class-II pyridoxal-phosphate-dependent aminotransferase family. BioF subfamily. In terms of assembly, homodimer. Pyridoxal 5'-phosphate is required as a cofactor.

It catalyses the reaction 6-carboxyhexanoyl-[ACP] + L-alanine + H(+) = (8S)-8-amino-7-oxononanoate + holo-[ACP] + CO2. The protein operates within cofactor biosynthesis; biotin biosynthesis. In terms of biological role, catalyzes the decarboxylative condensation of pimeloyl-[acyl-carrier protein] and L-alanine to produce 8-amino-7-oxononanoate (AON), [acyl-carrier protein], and carbon dioxide. The sequence is that of 8-amino-7-oxononanoate synthase from Hahella chejuensis (strain KCTC 2396).